The chain runs to 123 residues: uncharacterized protein (123 aa).

Residues 5-25 (GTLVILFAIILILCIMLLFYY) traverse the membrane as a helical segment.

Belongs to the asfivirus CP123L family.

It localises to the host membrane. It is found in the virion. This is an uncharacterized protein from Ornithodoros (relapsing fever ticks).